Here is a 129-residue protein sequence, read N- to C-terminus: Small ribosomal subunit protein uS11 (129 aa).

Belongs to the universal ribosomal protein uS11 family. In terms of assembly, part of the 30S ribosomal subunit. Interacts with proteins S7 and S18. Binds to IF-3.

Functionally, located on the platform of the 30S subunit, it bridges several disparate RNA helices of the 16S rRNA. Forms part of the Shine-Dalgarno cleft in the 70S ribosome. The sequence is that of Small ribosomal subunit protein uS11 from Bradyrhizobium sp. (strain BTAi1 / ATCC BAA-1182).